A 178-amino-acid chain; its full sequence is Large ribosomal subunit protein uL6 (178 aa).

Belongs to the universal ribosomal protein uL6 family. Part of the 50S ribosomal subunit.

In terms of biological role, this protein binds to the 23S rRNA, and is important in its secondary structure. It is located near the subunit interface in the base of the L7/L12 stalk, and near the tRNA binding site of the peptidyltransferase center. The sequence is that of Large ribosomal subunit protein uL6 from Frankia alni (strain DSM 45986 / CECT 9034 / ACN14a).